Consider the following 490-residue polypeptide: Auxin transporter-like protein 5 (490 aa).

The Cytoplasmic segment spans residues 1 to 55 (MEMANDKVAETVIVGNYVEMESEGKPPQDIKSKLSNFLWHGGSAYDAWFSCASNQ). The chain crosses the membrane as a helical span at residues 56–73 (VAQVLLTLPYSFSQLGML). Over 74–75 (SG) the chain is Extracellular. Residues 76–96 (ILFQLFYGILGSWTAYLISIL) form a helical membrane-spanning segment. Over 97–132 (YVEYRTRKEREKVNFRSHVIQWFEVLDGLLGKHWRN) the chain is Cytoplasmic. The helical transmembrane segment at 133-153 (VGLGFNCTFLLFGSVIQLIAC) threads the bilayer. Residues 154–168 (ASNIYYINDNLDKRT) are Extracellular-facing. Residues 169–189 (WTYIFGACCATTVFIPSFHNY) traverse the membrane as a helical segment. Residue Arg190 is a topological domain, cytoplasmic. A helical membrane pass occupies residues 191–211 (IWSFLGLVMTTYTAWYLTIAA). Over 212-227 (VLHGQVEGVKHSGPNK) the chain is Extracellular. A helical transmembrane segment spans residues 228-248 (IILYFTGATNILYTFGGHAVT). Residues 249 to 262 (VEIMHAMWKPQKFK) are Cytoplasmic-facing. Residues 263 to 283 (AIYLLATLYVLTLTIPSATAV) traverse the membrane as a helical segment. The Extracellular segment spans residues 284–310 (YWAFGDMLLNHSNAFALLPKSPFRDMA). Residue Asn293 is glycosylated (N-linked (GlcNAc...) asparagine). Residues 311 to 331 (VILMLIHQFITFGFACTPLYF) traverse the membrane as a helical segment. Over 332–352 (VWEKTVGMHECKSLCKRALVR) the chain is Cytoplasmic. Residues 353-373 (LPVVIPIWFLAIIFPFFGPIN) form a helical membrane-spanning segment. At 374-376 (STV) the chain is on the extracellular side. A helical transmembrane segment spans residues 377–397 (GSLLVSFTVYIIPALAHIFTF). Over 398-420 (KSSSARQNAVEQPPKFVGRWVGT) the chain is Cytoplasmic. A helical transmembrane segment spans residues 421–441 (FVINVFIVVWVLIVGFGFGGW). Residues 442–490 (ASMVNFVHQIDTFGLFTKCYQCPPPTPSVPTMPPHQMNATAPSPHHHHH) are Extracellular-facing. Asn479 carries an N-linked (GlcNAc...) asparagine glycan.

This sequence belongs to the amino acid/polyamine transporter 2 family. Amino acid/auxin permease (AAAP) (TC 2.A.18.1) subfamily. In terms of tissue distribution, shoots and roots of nodulating plants, at low levels.

The protein localises to the cell membrane. In terms of biological role, carrier protein involved in proton-driven auxin influx. Mediates the formation of auxin gradient from developing leaves (site of auxin biosynthesis) to tips by contributing to the loading of auxin in vascular tissues and facilitating acropetal (base to tip) auxin transport within inner tissues of the root apex, and basipetal (tip to base) auxin transport within outer tissues of the root apex. May be involved in lateral roots and nodules formation. The sequence is that of Auxin transporter-like protein 5 (LAX5) from Medicago truncatula (Barrel medic).